The chain runs to 264 residues: Thymidylate synthase (264 aa).

Residue Arg21 participates in dUMP binding. A (6R)-5,10-methylene-5,6,7,8-tetrahydrofolate-binding site is contributed by His51. 126-127 (RR) is a binding site for dUMP. The active-site Nucleophile is Cys146. DUMP is bound by residues 166-169 (RSAD), Asn177, and 207-209 (HLY). Asp169 serves as a coordination point for (6R)-5,10-methylene-5,6,7,8-tetrahydrofolate. Position 263 (Ala263) interacts with (6R)-5,10-methylene-5,6,7,8-tetrahydrofolate.

Belongs to the thymidylate synthase family. Bacterial-type ThyA subfamily. As to quaternary structure, homodimer.

Its subcellular location is the cytoplasm. It catalyses the reaction dUMP + (6R)-5,10-methylene-5,6,7,8-tetrahydrofolate = 7,8-dihydrofolate + dTMP. It functions in the pathway pyrimidine metabolism; dTTP biosynthesis. Functionally, catalyzes the reductive methylation of 2'-deoxyuridine-5'-monophosphate (dUMP) to 2'-deoxythymidine-5'-monophosphate (dTMP) while utilizing 5,10-methylenetetrahydrofolate (mTHF) as the methyl donor and reductant in the reaction, yielding dihydrofolate (DHF) as a by-product. This enzymatic reaction provides an intracellular de novo source of dTMP, an essential precursor for DNA biosynthesis. The sequence is that of Thymidylate synthase from Rhodopirellula baltica (strain DSM 10527 / NCIMB 13988 / SH1).